A 273-amino-acid polypeptide reads, in one-letter code: Pantothenate synthetase (273 aa).

Residue 27-34 participates in ATP binding; it reads MGALHEGH. Residue histidine 34 is the Proton donor of the active site. Residue glutamine 58 participates in (R)-pantoate binding. Position 58 (glutamine 58) interacts with beta-alanine. 144 to 147 provides a ligand contact to ATP; the sequence is GKKD. A (R)-pantoate-binding site is contributed by glutamine 150. ATP contacts are provided by residues valine 173 and 181 to 184; that span reads LSSR.

The protein belongs to the pantothenate synthetase family. As to quaternary structure, homodimer.

The protein localises to the cytoplasm. The enzyme catalyses (R)-pantoate + beta-alanine + ATP = (R)-pantothenate + AMP + diphosphate + H(+). The protein operates within cofactor biosynthesis; (R)-pantothenate biosynthesis; (R)-pantothenate from (R)-pantoate and beta-alanine: step 1/1. Functionally, catalyzes the condensation of pantoate with beta-alanine in an ATP-dependent reaction via a pantoyl-adenylate intermediate. The protein is Pantothenate synthetase of Sulfurimonas denitrificans (strain ATCC 33889 / DSM 1251) (Thiomicrospira denitrificans (strain ATCC 33889 / DSM 1251)).